Reading from the N-terminus, the 199-residue chain is dITP/XTP pyrophosphatase (199 aa).

7 to 12 (SANKGK) is a binding site for substrate. Mg(2+)-binding residues include aspartate 38 and aspartate 73. Aspartate 73 acts as the Proton acceptor in catalysis. Substrate contacts are provided by residues serine 74, 155-158 (FGYD), lysine 178, and 183-184 (HR).

It belongs to the HAM1 NTPase family. In terms of assembly, homodimer. Mg(2+) serves as cofactor.

The enzyme catalyses XTP + H2O = XMP + diphosphate + H(+). The catalysed reaction is dITP + H2O = dIMP + diphosphate + H(+). It catalyses the reaction ITP + H2O = IMP + diphosphate + H(+). Its function is as follows. Pyrophosphatase that catalyzes the hydrolysis of nucleoside triphosphates to their monophosphate derivatives, with a high preference for the non-canonical purine nucleotides XTP (xanthosine triphosphate), dITP (deoxyinosine triphosphate) and ITP. Seems to function as a house-cleaning enzyme that removes non-canonical purine nucleotides from the nucleotide pool, thus preventing their incorporation into DNA/RNA and avoiding chromosomal lesions. The sequence is that of dITP/XTP pyrophosphatase from Aliarcobacter butzleri (strain RM4018) (Arcobacter butzleri).